The primary structure comprises 204 residues: Cytochrome c oxidase subunit 3 (204 aa).

5 helical membrane passes run 12 to 32, 56 to 76, 101 to 121, 133 to 153, and 171 to 191; these read YGNLLLMLGFLLMIMTMIQWW, GMMLFIVSEICFFFAFFWAYF, FQIPLLNTAILLSSGVSVTWA, AIHSMTITITLGFYFTFLQMM, and FFVATGFHGLHVIIGSTFLFM.

The protein belongs to the cytochrome c oxidase subunit 3 family. In terms of assembly, component of the cytochrome c oxidase (complex IV, CIV), a multisubunit enzyme composed of a catalytic core of 3 subunits and several supernumerary subunits. The complex exists as a monomer or a dimer and forms supercomplexes (SCs) in the inner mitochondrial membrane with ubiquinol-cytochrome c oxidoreductase (cytochrome b-c1 complex, complex III, CIII).

The protein localises to the mitochondrion inner membrane. It catalyses the reaction 4 Fe(II)-[cytochrome c] + O2 + 8 H(+)(in) = 4 Fe(III)-[cytochrome c] + 2 H2O + 4 H(+)(out). Component of the cytochrome c oxidase, the last enzyme in the mitochondrial electron transport chain which drives oxidative phosphorylation. The respiratory chain contains 3 multisubunit complexes succinate dehydrogenase (complex II, CII), ubiquinol-cytochrome c oxidoreductase (cytochrome b-c1 complex, complex III, CIII) and cytochrome c oxidase (complex IV, CIV), that cooperate to transfer electrons derived from NADH and succinate to molecular oxygen, creating an electrochemical gradient over the inner membrane that drives transmembrane transport and the ATP synthase. Cytochrome c oxidase is the component of the respiratory chain that catalyzes the reduction of oxygen to water. Electrons originating from reduced cytochrome c in the intermembrane space (IMS) are transferred via the dinuclear copper A center (CU(A)) of subunit 2 and heme A of subunit 1 to the active site in subunit 1, a binuclear center (BNC) formed by heme A3 and copper B (CU(B)). The BNC reduces molecular oxygen to 2 water molecules using 4 electrons from cytochrome c in the IMS and 4 protons from the mitochondrial matrix. This Enteroctopus dofleini (North Pacific giant octopus) protein is Cytochrome c oxidase subunit 3 (COIII).